A 74-amino-acid polypeptide reads, in one-letter code: Conotoxin MiK41 (74 aa).

Positions 1–22 are cleaved as a signal peptide; the sequence is MKLTCVLIITVLFLTACQLTTA. Positions 23 to 45 are excised as a propeptide; it reads VTYSRGEHKHRALMSTGTNYRLP. 3 cysteine pairs are disulfide-bonded: cysteine 48–cysteine 62, cysteine 55–cysteine 66, and cysteine 61–cysteine 73.

The protein belongs to the conotoxin O1 superfamily. Expressed by the venom duct.

The protein resides in the secreted. This chain is Conotoxin MiK41, found in Conus miles (Soldier cone).